Here is a 296-residue protein sequence, read N- to C-terminus: Acetylglutamate kinase (296 aa).

Residues 66 to 67, Arg-88, and Asn-191 each bind substrate; that span reads GG.

It belongs to the acetylglutamate kinase family. ArgB subfamily.

It localises to the cytoplasm. The catalysed reaction is N-acetyl-L-glutamate + ATP = N-acetyl-L-glutamyl 5-phosphate + ADP. It functions in the pathway amino-acid biosynthesis; L-arginine biosynthesis; N(2)-acetyl-L-ornithine from L-glutamate: step 2/4. Its function is as follows. Catalyzes the ATP-dependent phosphorylation of N-acetyl-L-glutamate. This Lawsonia intracellularis (strain PHE/MN1-00) protein is Acetylglutamate kinase.